A 378-amino-acid polypeptide reads, in one-letter code: Chaperone protein DnaJ (378 aa).

The J domain occupies 5–70 (DYYEVLSVSR…DKKAAYDQFG (66 aa)). The segment at 133–211 (GLTKELRIPT…CHGEGRVEKS (79 aa)) adopts a CR-type zinc-finger fold. The Zn(2+) site is built by C146, C149, C163, C166, C185, C188, C199, and C202. CXXCXGXG motif repeat units follow at residues 146–153 (CDSCDGSG), 163–170 (CGTCHGQG), 185–192 (CPTCHGRG), and 199–206 (CNKCHGEG).

This sequence belongs to the DnaJ family. As to quaternary structure, homodimer. The cofactor is Zn(2+).

It is found in the cytoplasm. Functionally, participates actively in the response to hyperosmotic and heat shock by preventing the aggregation of stress-denatured proteins and by disaggregating proteins, also in an autonomous, DnaK-independent fashion. Unfolded proteins bind initially to DnaJ; upon interaction with the DnaJ-bound protein, DnaK hydrolyzes its bound ATP, resulting in the formation of a stable complex. GrpE releases ADP from DnaK; ATP binding to DnaK triggers the release of the substrate protein, thus completing the reaction cycle. Several rounds of ATP-dependent interactions between DnaJ, DnaK and GrpE are required for fully efficient folding. Also involved, together with DnaK and GrpE, in the DNA replication of plasmids through activation of initiation proteins. This Shewanella sediminis (strain HAW-EB3) protein is Chaperone protein DnaJ.